Reading from the N-terminus, the 76-residue chain is Kappa-actitoxin-Avd4o (76 aa).

The N-terminal stretch at 1-19 (MNKALFLSLVVLCAAVVFA) is a signal peptide. Positions 20–33 (AEDLQKAKHAPFKL) are excised as a propeptide. Disulfide bonds link Cys-37–Cys-72, Cys-39–Cys-65, and Cys-55–Cys-73.

Belongs to the sea anemone type 3 (BDS) potassium channel toxin family. Experimental results show no expression in the ectodermal tissue from the distal and proximal tentacles, body wall, and oral disk. Since paralogs are expressed in this tissue, an expression of this toxin in this tissue is probable. The negative results could be explained by the very low abundance of EST sequences.

It is found in the secreted. It localises to the nematocyst. Blocks Kv3 voltage-gated potassium channels. Reduces blood pressure. This chain is Kappa-actitoxin-Avd4o, found in Anemonia viridis (Snakelocks anemone).